Reading from the N-terminus, the 312-residue chain is Ribosomal protein L11 methyltransferase (312 aa).

Residues Thr-162, Gly-183, Asp-205, and Asn-248 each contribute to the S-adenosyl-L-methionine site.

The protein belongs to the methyltransferase superfamily. PrmA family.

The protein localises to the cytoplasm. The enzyme catalyses L-lysyl-[protein] + 3 S-adenosyl-L-methionine = N(6),N(6),N(6)-trimethyl-L-lysyl-[protein] + 3 S-adenosyl-L-homocysteine + 3 H(+). Methylates ribosomal protein L11. The polypeptide is Ribosomal protein L11 methyltransferase (Exiguobacterium sp. (strain ATCC BAA-1283 / AT1b)).